The sequence spans 195 residues: Nodulin-20a (195 aa).

Positions 1 to 17 (MRVVLITLFLFIGAAVA) are cleaved as a signal peptide.

It belongs to the nodulin 20 family.

The protein localises to the symbiosome. Its subcellular location is the peribacteroid membrane. It is found in the peribacteroid space. This is Nodulin-20a (NOD20A) from Glycine max (Soybean).